Reading from the N-terminus, the 153-residue chain is MKAVIQRVSRASVMVGGDTVGEIGPGLAVLLGVAEGDTQADAEYLVSKIINLRIFADGEGKFNLSLKDLCRELLVVSQFTLIADTRKGRRPSFVEAAQPEEADRLYNLFIRLCRGEGVQAATGKFGAMMMLEIHNDGPVTIILDSRDRLNPRQ.

The Gly-cisPro motif, important for rejection of L-amino acids signature appears at 137 to 138; that stretch reads GP.

It belongs to the DTD family. In terms of assembly, homodimer.

It is found in the cytoplasm. It catalyses the reaction glycyl-tRNA(Ala) + H2O = tRNA(Ala) + glycine + H(+). The enzyme catalyses a D-aminoacyl-tRNA + H2O = a tRNA + a D-alpha-amino acid + H(+). An aminoacyl-tRNA editing enzyme that deacylates mischarged D-aminoacyl-tRNAs. Also deacylates mischarged glycyl-tRNA(Ala), protecting cells against glycine mischarging by AlaRS. Acts via tRNA-based rather than protein-based catalysis; rejects L-amino acids rather than detecting D-amino acids in the active site. By recycling D-aminoacyl-tRNA to D-amino acids and free tRNA molecules, this enzyme counteracts the toxicity associated with the formation of D-aminoacyl-tRNA entities in vivo and helps enforce protein L-homochirality. This is D-aminoacyl-tRNA deacylase from Dehalococcoides mccartyi (strain ATCC BAA-2266 / KCTC 15142 / 195) (Dehalococcoides ethenogenes (strain 195)).